The sequence spans 249 residues: tRNA (guanine-N(1)-)-methyltransferase (249 aa).

S-adenosyl-L-methionine is bound by residues glycine 113 and valine 132 to valine 137.

It belongs to the RNA methyltransferase TrmD family. As to quaternary structure, homodimer.

It localises to the cytoplasm. The catalysed reaction is guanosine(37) in tRNA + S-adenosyl-L-methionine = N(1)-methylguanosine(37) in tRNA + S-adenosyl-L-homocysteine + H(+). Its function is as follows. Specifically methylates guanosine-37 in various tRNAs. This Desulforudis audaxviator (strain MP104C) protein is tRNA (guanine-N(1)-)-methyltransferase.